Consider the following 41-residue polypeptide: Antimicrobial protein PN-AMP1 (41 aa).

Gln1 bears the Pyrrolidone carboxylic acid mark. The 41-residue stretch at 1-41 (QQCGRQASGRLCGNRLCCSQWGYCGSTASYCGAGCQSQCRS) folds into the Chitin-binding type-1 domain. Intrachain disulfides connect Cys3–Cys18, Cys12–Cys24, Cys17–Cys31, and Cys35–Cys39.

In terms of biological role, chitin-binding protein with a defensive function against numerous chitin containing fungal pathogens. It is also an inhibitor of Gram-positive bacteria such as B.subtilis. In Ipomoea nil (Japanese morning glory), this protein is Antimicrobial protein PN-AMP1.